Here is a 1807-residue protein sequence, read N- to C-terminus: Atrochrysone carboxylic acid synthase Agnpks1 (1807 aa).

The N-terminal acylcarrier protein transacylase domain (SAT) stretch occupies residues 41–173 (LFRELHNHSK…ITGAQVIRQA (133 aa)). The 435-residue stretch at 411-845 (QSKIAIVGMS…GGNTTILLEE (435 aa)) folds into the Ketosynthase family 3 (KS3) domain. Active-site for beta-ketoacyl synthase activity residues include C584, H720, and H763. The malonyl-CoA:ACP transacylase (MAT) domain stretch occupies residues 946–1265 (FTFTGQGASY…SLAALHCAGV (320 aa)). The segment at 1334-1653 (TSTVHQIIQE…RILLSRFFSA (320 aa)) is product template (PT) domain. The interval 1338–1473 (HQIIQESIDG…ATLIYGDPSE (136 aa)) is N-terminal hotdog fold. A PKS/mFAS DH domain is found at 1338–1648 (HQIIQESIDG…FRRYPRILLS (311 aa)). Catalysis depends on H1370, which acts as the Proton acceptor; for dehydratase activity. Residues 1500–1648 (VANRFNHQMA…FRRYPRILLS (149 aa)) are C-terminal hotdog fold. D1559 (proton donor; for dehydratase activity) is an active-site residue. The Carrier domain occupies 1732–1806 (DTTTAKAIQI…DLRSWLEEYY (75 aa)). An O-(pantetheine 4'-phosphoryl)serine modification is found at S1766.

The catalysed reaction is holo-[ACP] + 8 malonyl-CoA + 8 H(+) = atrochrysone carboxyl-[ACP] + 8 CO2 + 8 CoA + 2 H2O. Its pathway is secondary metabolite biosynthesis. Its function is as follows. Non-reducing polyketide synthase; part of the gene cluster that mediates the biosynthesis of agnestins, dihydroxy-xanthone metabolites. The pathway begins with the assembly and cyclization of atrochrysone thioester by the non-reducing polyketide synthase Agnpks1. The atrochrysone carboxyl ACP thioesterase AgnL7 then breaks the thioester bond and releases the atrochrysone carboxylic acid as the first enzyme-free intermediate. The decarboxylase AgnL1 then catalyzes the concerted decarboxylation-elimination required to convert atochrysone carboxylic acid into emodin anthrone, which is further oxidized to emodin by the anthrone oxygenase AgnL2. Emodin then undergoes reduction catalyzed by the oxidoreductase AgnL4 to yield the dihydroquinone tautomer which is the substrate for reduction by the short chain dehydrogenase AgnL6 reduction to produce hydroxyketone, followed by AgnL8 dehydration and likely spontaneous autoxidation to chrysophanol. Baeyer-Villiger oxidation by the oxidase AgnL3 leads to monodictyphenone via cleavage of the C-10/C-10a bond of chrysophanol. Alternative cleavage at the C-4a/C-10 bond of chrysophanol also leads to the formation some cephalone F. Further conversion to agnestins A and B, requires reduction to dihydro-monodictyphenone, oxidation to agnestin C probably via an epoxide, and rearrangement to either agnestin A or agnestin B directly, although agnestin A or agnestin B can also interconvert. Within the cluster, AgnR1 is the only unassigned oxidoreductase present which could be involved in this conversion. However, AgnR1 seems not to be involved in this step, and thus genes involved in the proposed oxidation/reduction may be located elsewhere on the genome. Further agnestin A derivatives are probably formed by spontaneous decarboxylations, dehydrations and methanolysis reactions. This chain is Atrochrysone carboxylic acid synthase Agnpks1, found in Paecilomyces divaricatus (Penicillium divaricatum).